A 255-amino-acid polypeptide reads, in one-letter code: SKA complex subunit 1 (255 aa).

Alanine 2 bears the N-acetylalanine mark. Residues 49-91 (INELLNKLELEIQYQEQTNNSLKELCESLEEDYKDIEHLKENV) adopt a coiled-coil conformation. The interval 92–132 (PSHLPQVTVTQSCVKGSDLDPEEPIKVEEPEPVKKPPKEQR) is flexiple loop that anchors MAPRE1. An SXLP motif; mediates interaction with MAPRE1, targeting to microtubule plus ends, stabilization on kinetochores and is required for proper chromosome alignment to the metaphase plate motif is present at residues 93–96 (SHLP). A disordered region spans residues 106 to 131 (KGSDLDPEEPIKVEEPEPVKKPPKEQ). The segment covering 114 to 131 (EPIKVEEPEPVKKPPKEQ) has biased composition (basic and acidic residues). The binds microtubules and protein phosphatase PP1 subunit PPP1CA stretch occupies residues 132-255 (RSIKEMPFIT…GGGLTRYVIT (124 aa)). Threonine 157 carries the post-translational modification Phosphothreonine; by AURKB. Serine 242 carries the post-translational modification Phosphoserine; by AURKB.

Belongs to the SKA1 family. In terms of assembly, component of the SKA complex, composed of SKA1, SKA2 and SKA3. The SKA complex is a homodimer organized around a central W-shaped coiled-coil structure, formed by the interacting domains of SKA1, SKA2, and SKA3, each end of the 'W' is extended further by the C-terminal microtubule-binding domains of SKA1 and SKA3; the complex forms extended structures on microtubules. Interacts (via SXLP motif) with MAPRE1 (via C-terminus); the interaction is direct and stabilizes the kinetochore-microtubule attachment of the SKA1 complex. Interacts (via C-terminus) with protein phosphatase PP1 subunit PPP1CA; the interaction is direct and required for recruitment of PPP1CA to the kinetochore. Interacts with the NDC80 complex; the interaction is required to establish kinetochore-microtubule end-on attachments. In terms of processing, phosphorylated by AURKB at Thr-157 and Ser-242 which negatively regulates the association of the SKA complex with kinetochores to allow correction of aberrant kinetochore-microtubule interactions and promote mitotic sister chromatid biorientation.

The protein localises to the cytoplasm. It is found in the cytoskeleton. The protein resides in the spindle. It localises to the chromosome. Its subcellular location is the centromere. The protein localises to the kinetochore. It is found in the microtubule organizing center. The protein resides in the centrosome. In terms of biological role, component of the SKA complex, a microtubule plus end-binding complex of the outer kinetochore that stabilizes spindle microtubule-kinetochore attachments, promotes alignment of chromosomes at the mitotic spindle equator (chromosome congression) and assists suppression of the spindle assembly checkpoint. Kinetochores, consisting of a centromere-associated inner segment and a microtubule-contacting outer segment, play a crucial role in chromosome segregation by mediating the physical connection between centromeric DNA and spindle microtubules. The outer kinetochore is made up of the ten-subunit KMN network complex, comprising the MIS12, NDC80 and KNL1 complexes, and auxiliary microtubule-associated components such as the SKA complex; together they connect the outer kinetochore with the inner kinetochore, bind microtubules, and mediate interactions with mitotic checkpoint proteins that delay anaphase until chromosomes are bioriented on the spindle. The SKA complex is loaded onto bioriented kinetochores and it facilitates chromosome congression by stabilizing microtubules together with MAPRE1, and end-on attachment of the NDC80 complex to depolymerizing spindle microtubules, thereby assisting the poleward-moving kinetochore in withstanding microtubule pulling forces. The complex associates with dynamic microtubule plus-ends and can track both depolymerizing and elongating microtubules. The complex recruits protein phosphatase 1 (PP1) to the kinetochore in prometaphase and metaphase, to oppose spindle assembly checkpoint signaling and promote the onset of anaphase. In the complex, it mediates interactions with microtubules. It also stimulates AURKB/Aurora B catalytic activity. During meiosis the SKA complex stabilizes the meiotic spindle and is required for its migration to the cortex. This Homo sapiens (Human) protein is SKA complex subunit 1 (SKA1).